The primary structure comprises 338 residues: Tetraacyldisaccharide 4'-kinase (338 aa).

66–73 (IAGGAGKT) is a binding site for ATP.

The protein belongs to the LpxK family.

It carries out the reaction a lipid A disaccharide + ATP = a lipid IVA + ADP + H(+). It functions in the pathway glycolipid biosynthesis; lipid IV(A) biosynthesis; lipid IV(A) from (3R)-3-hydroxytetradecanoyl-[acyl-carrier-protein] and UDP-N-acetyl-alpha-D-glucosamine: step 6/6. Transfers the gamma-phosphate of ATP to the 4'-position of a tetraacyldisaccharide 1-phosphate intermediate (termed DS-1-P) to form tetraacyldisaccharide 1,4'-bis-phosphate (lipid IVA). This Delftia acidovorans (strain DSM 14801 / SPH-1) protein is Tetraacyldisaccharide 4'-kinase.